The chain runs to 482 residues: Protein DETOXIFICATION 13 (482 aa).

The next 12 helical transmembrane spans lie at 39–59 (LICF…LQII), 77–97 (LASS…SCAL), 124–144 (LALV…LLVF), 159–179 (AACL…TRYF), 188–208 (LLIT…LLVY), 218–238 (ALAL…LMCF), 268–288 (AAMI…SGLL), 297–317 (VLSV…AIAA), 337–357 (IVVY…STSL), 381–401 (MAPL…LSGI), 416–436 (LGAF…WIHL), and 439–459 (VGLW…LTLV).

It belongs to the multi antimicrobial extrusion (MATE) (TC 2.A.66.1) family.

It is found in the membrane. The sequence is that of Protein DETOXIFICATION 13 from Arabidopsis thaliana (Mouse-ear cress).